The primary structure comprises 336 residues: Phytochrome A-associated F-box protein (336 aa).

In terms of domain architecture, F-box spans 3 to 55; the sequence is ESVFSCIPEDVVFNIFFKLQDDPRNWARLACVCTKFSSIVRNVCCKTQCYSAI. Positions 197 to 201 match the Nuclear localization signal motif; it reads RKRRK.

As to quaternary structure, probable component of an E3 ubiquitin ligase SCF complex. Interacts with SKP1A/ASK1 and SKP1B/ASK2.

It localises to the nucleus. The protein operates within protein modification; protein ubiquitination. Its function is as follows. Component of SCF(ASK-cullin-F-box) E3 ubiquitin ligase complexes, which may mediate the ubiquitination and subsequent proteasomal degradation of target proteins. Negative regulator of the phyA signaling pathway that shifts the responsiveness of the phyA signaling system associated with hypocotyl elongation from red to far-red wavelength. The polypeptide is Phytochrome A-associated F-box protein (EID1) (Arabidopsis thaliana (Mouse-ear cress)).